The sequence spans 202 residues: Inner membrane-spanning protein YciB (202 aa).

The next 6 helical transmembrane spans lie at 3–23, 46–66, 74–94, 100–120, 145–165, and 173–193; these read FFLD…AGAA, ILIA…IVWL, MLWV…VFHN, WKPT…ALLF, LAWI…AYGY, and FKLF…GFYL.

The protein belongs to the YciB family.

Its subcellular location is the cell inner membrane. Its function is as follows. Plays a role in cell envelope biogenesis, maintenance of cell envelope integrity and membrane homeostasis. The chain is Inner membrane-spanning protein YciB from Azoarcus sp. (strain BH72).